We begin with the raw amino-acid sequence, 382 residues long: Alkanesulfonate monooxygenase (382 aa).

The protein belongs to the SsuD family.

The catalysed reaction is an alkanesulfonate + FMNH2 + O2 = an aldehyde + FMN + sulfite + H2O + 2 H(+). In terms of biological role, catalyzes the desulfonation of aliphatic sulfonates. The polypeptide is Alkanesulfonate monooxygenase (Pseudomonas putida (strain W619)).